The primary structure comprises 750 residues: MSDQITVDELWAECEQTFEDLFLNLKKGLSRKRYMEIYTKIYNYCSSANEKALIDFYIPKVKVLVAQKAVEIMSRSESYPNDALLLFFRNQWNEWKMSSNVLKNLLSPVNKIHSSDKKTTSSSANQNESVVYSDTLNSWRETAFNPLKNKLSVSLLQIIKNDRTGFSTNLQVLSDSLECYVQLGPEKNKLEIYQSCFEQQFLQETETFYKAESADFIEKNGVCEYMRHVYNRIEQETNRVNQYMPISTLEKLTKILNNVLISNYKEQFASKFLDILIEDKSSDLVMMYSLLSRVNHLTPLKNIFSDFIKSEGLKEIESNLKEAQEKPQVLISILLKIYSRFNIMIKECYGNDTDFTTAMDKSFSILVNENPASYDPKKKESNIPVVLSKFCDQILRKGPHHISDEAELEKKLTEAVCLFKYLPDKDIFMLNYQKMLSKRLVEDLSASEDAETLMINKLKNYQGFDYCTKLTRMITDMRLCKDININFQNHLNEKSLTLPYQFNFYVLTNGSWTLTNKQTATPFKPPSEMLSSITYFESFYKKSYQGRVLTFLYDFSRADVDSRQAKGKIYKLTTTAYQMAILLMFNGADKITRFLINDTIGLDETSIRLPLLALIKTGIIECSEPSFKNWNNDTEFTVNSKFSSKKMKVSCNIAVQIGETKQSEGQQTVSEQEIEKERFFKLQAAIVRIMKSKKTMTHNDLTVETTTQVSKWFTPKITAIKKAIEYLIDQEYIRRTTDDNPSARKYEYMA.

A Cullin neddylation domain is found at 678–739; the sequence is RFFKLQAAIV…QEYIRRTTDD (62 aa). A Glycyl lysine isopeptide (Lys-Gly) (interchain with G-Cter in NEDD8) cross-link involves residue Lys-691.

Belongs to the cullin family. In terms of processing, neddylated; which enhances the ubiquitination activity of SCF-like complex.

It functions in the pathway protein modification; protein ubiquitination. Probable core component of cullin-based SCF-like E3 ubiquitin-protein ligase complexes which mediate the ubiquitination and subsequent proteasomal degradation of target proteins. The E3 ubiquitin-protein ligase activity of the complex is dependent on the neddylation of the cullin subunit. In Dictyostelium discoideum (Social amoeba), this protein is Cullin-5 (culE).